A 69-amino-acid polypeptide reads, in one-letter code: Large ribosomal subunit protein uL29 (69 aa).

It belongs to the universal ribosomal protein uL29 family.

The protein is Large ribosomal subunit protein uL29 of Parasynechococcus marenigrum (strain WH8102).